A 124-amino-acid polypeptide reads, in one-letter code: Ribonuclease pancreatic (124 aa).

The segment at 1–24 (KESSAMKFQRQHMDSSGSPSTNAN) is disordered. Substrate is bound by residues K7 and R10. The active-site Proton acceptor is the H12. Residues 14-24 (DSSGSPSTNAN) are compositionally biased toward polar residues. Cystine bridges form between C26/C84, C40/C95, C58/C110, and C65/C72. An N-linked (GlcNAc...) asparagine glycan is attached at N34. Substrate contacts are provided by residues 41 to 45 (KPVNT), K66, and R85. H119 (proton donor) is an active-site residue.

The protein belongs to the pancreatic ribonuclease family. As to quaternary structure, monomer. Interacts with and forms tight 1:1 complexes with RNH1. Dimerization of two such complexes may occur. Interaction with RNH1 inhibits this protein. Pancreas.

The protein localises to the secreted. It carries out the reaction an [RNA] containing cytidine + H2O = an [RNA]-3'-cytidine-3'-phosphate + a 5'-hydroxy-ribonucleotide-3'-[RNA].. It catalyses the reaction an [RNA] containing uridine + H2O = an [RNA]-3'-uridine-3'-phosphate + a 5'-hydroxy-ribonucleotide-3'-[RNA].. Functionally, endonuclease that catalyzes the cleavage of RNA on the 3' side of pyrimidine nucleotides. Acts on single-stranded and double-stranded RNA. The sequence is that of Ribonuclease pancreatic (RNASE1) from Chinchilla chinchilla (Short-tailed chinchilla).